Reading from the N-terminus, the 590-residue chain is MTLHNNSTTSPLFPNISSSWIHSPSDAGLPPGTDTHFGSYNVSRAAGNFSSPDGTTDDPLGGHTVWQVVFIAFLTGILALVTIIGNILVIVSFKVNKQLKTVNNYFLLSLACADLIIGVISMNLFTTYIIMNRWALGNLACDLWLAIDYVASNASVMNLLVISFDRYFSITRPLTYRAKRTTKRAGVMIGLAWVISFVLWAPAILFWQYFVGKRTVPPGECFIQFLSEPTITFGTAIAAFYMPVTIMTILYWRIYKETEKRTKELAGLQASGTEAETENFVHPTGSSRSCSSYELQQQSMKRSNRRKYGRCHFWFTTKSWKPSSEQMDQDHSSSDSWNNNDAAASLENSASSDEEDIGSETRAIYSIVLKLPGHSTILNSTKLPSSDNLQVPEEELGMVDLERKADKLQAQKSVDDGGSFPKSFSKLPIQLESAVDTAKTSDVNSSVGKSTATLPLSFKEATLAKRFALKTRSQITKRKRMSLVKEKKAAQTLSAILLAFIITWTPYNIMVLVNTFCDSCIPKTFWNLGYWLCYINSTVNPVCYALCNKTFRTTFKMLLLCQCGKKKRRKQQYQQRQSVIFHKRAPEQAL.

Over Met-1–Gln-67 the chain is Extracellular. Residues Asn-5, Asn-6, Asn-15, Asn-41, and Asn-48 are each glycosylated (N-linked (GlcNAc...) asparagine). The helical transmembrane segment at Val-68–Val-91 threads the bilayer. Over Ser-92 to Asn-104 the chain is Cytoplasmic. A helical transmembrane segment spans residues Tyr-105 to Ile-130. The Extracellular segment spans residues Met-131 to Asp-142. A disulfide bridge links Cys-141 with Cys-221. A helical transmembrane segment spans residues Leu-143 to Phe-164. At Asp-165–Arg-184 the chain is on the cytoplasmic side. Residues Ala-185–Phe-206 traverse the membrane as a helical segment. Topologically, residues Trp-207–Pro-229 are extracellular. A helical transmembrane segment spans residues Thr-230 to Trp-252. The Cytoplasmic segment spans residues Arg-253 to Gln-491. The short motif at Ala-275 to Val-281 is the Basolateral sorting signal element. The segment at Ser-323–Ile-357 is disordered. The span at Ser-334–Ser-345 shows a compositional bias: low complexity. Ser-385 is subject to Phosphoserine. A helical transmembrane segment spans residues Thr-492–Asn-514. Residues Thr-515–Trp-526 are Extracellular-facing. A disulfide bridge links Cys-517 with Cys-520. The helical transmembrane segment at Asn-527–Leu-546 threads the bilayer. Over Cys-547 to Leu-590 the chain is Cytoplasmic.

The protein belongs to the G-protein coupled receptor 1 family. Muscarinic acetylcholine receptor subfamily. CHRM3 sub-subfamily. As to quaternary structure, homodimer; the dimers can form tetramers. Interacts with NALCN. Interacts with TMEM147.

It is found in the cell membrane. It localises to the postsynaptic cell membrane. The protein localises to the basolateral cell membrane. The protein resides in the endoplasmic reticulum membrane. In terms of biological role, the muscarinic acetylcholine receptor mediates various cellular responses, including inhibition of adenylate cyclase, breakdown of phosphoinositides and modulation of potassium channels through the action of G proteins. Primary transducing effect is Pi turnover. This Gorilla gorilla gorilla (Western lowland gorilla) protein is Muscarinic acetylcholine receptor M3 (CHRM3).